The chain runs to 327 residues: Leucotoxin LukDv (327 aa).

The first 26 residues, 1 to 26 (MKMKKLVKSSVASSIALLLLSNTVDA), serve as a signal peptide directing secretion.

The protein belongs to the aerolysin family. In terms of assembly, toxicity requires sequential binding and synergistic association of a class S and a class F component which form heterooligomeric complexes. LukEv (class S) associates with LukDv (class F).

It localises to the secreted. Functionally, part of a bi-component leucotoxin that acts by forming pores in the membrane of the target cells. The activity of LukEv-LukDv to rabbit leukocytes is similar to that of the Panton-Valentine leucocidin (PVL). LukEv-LukDv is hemolytic to rabbit red blood cells although the activity is only 8% of gamma-hemolysin. This is Leucotoxin LukDv (lukDv) from Staphylococcus aureus (strain NCTC 8325 / PS 47).